Here is a 585-residue protein sequence, read N- to C-terminus: UvrABC system protein C (585 aa).

The GIY-YIG domain maps to 15 to 90 (AEPGVYQFLE…IKRHQPRYNV (76 aa)). A UVR domain is found at 198-233 (GILADPLRQEMQAAATAEEFERAANIRDRLAVIESF).

This sequence belongs to the UvrC family. In terms of assembly, interacts with UvrB in an incision complex.

It is found in the cytoplasm. The UvrABC repair system catalyzes the recognition and processing of DNA lesions. UvrC both incises the 5' and 3' sides of the lesion. The N-terminal half is responsible for the 3' incision and the C-terminal half is responsible for the 5' incision. This is UvrABC system protein C from Haloquadratum walsbyi (strain DSM 16790 / HBSQ001).